A 402-amino-acid chain; its full sequence is CinA-like protein (402 aa).

Belongs to the CinA family.

The sequence is that of CinA-like protein from Escherichia coli O17:K52:H18 (strain UMN026 / ExPEC).